The primary structure comprises 426 residues: Glutamate-1-semialdehyde 2,1-aminomutase (426 aa).

The residue at position 265 (Lys-265) is an N6-(pyridoxal phosphate)lysine.

It belongs to the class-III pyridoxal-phosphate-dependent aminotransferase family. HemL subfamily. In terms of assembly, homodimer. Requires pyridoxal 5'-phosphate as cofactor.

The protein resides in the cytoplasm. The enzyme catalyses (S)-4-amino-5-oxopentanoate = 5-aminolevulinate. It participates in porphyrin-containing compound metabolism; protoporphyrin-IX biosynthesis; 5-aminolevulinate from L-glutamyl-tRNA(Glu): step 2/2. The polypeptide is Glutamate-1-semialdehyde 2,1-aminomutase (Shigella boydii serotype 4 (strain Sb227)).